We begin with the raw amino-acid sequence, 467 residues long: L-seryl-tRNA(Sec) selenium transferase (467 aa).

Lys-298 carries the post-translational modification N6-(pyridoxal phosphate)lysine.

It belongs to the SelA family. Pyridoxal 5'-phosphate serves as cofactor.

Its subcellular location is the cytoplasm. It catalyses the reaction L-seryl-tRNA(Sec) + selenophosphate + H(+) = L-selenocysteinyl-tRNA(Sec) + phosphate. The protein operates within aminoacyl-tRNA biosynthesis; selenocysteinyl-tRNA(Sec) biosynthesis; selenocysteinyl-tRNA(Sec) from L-seryl-tRNA(Sec) (bacterial route): step 1/1. Its function is as follows. Converts seryl-tRNA(Sec) to selenocysteinyl-tRNA(Sec) required for selenoprotein biosynthesis. The chain is L-seryl-tRNA(Sec) selenium transferase from Alkaliphilus metalliredigens (strain QYMF).